Here is a 227-residue protein sequence, read N- to C-terminus: PKHD-type hydroxylase Veis_3084 (227 aa).

Residues 27 to 51 (DDGKDSAGTQARQAKNNQQLPRDSE) are disordered. Residues 33 to 47 (AGTQARQAKNNQQLP) show a composition bias toward polar residues. In terms of domain architecture, Fe2OG dioxygenase spans 78-179 (RVFPPRVNRY…RMACFFWVES (102 aa)). Positions 97, 99, and 160 each coordinate Fe cation. Arginine 170 is a binding site for 2-oxoglutarate.

Fe(2+) is required as a cofactor. Requires L-ascorbate as cofactor.

This chain is PKHD-type hydroxylase Veis_3084, found in Verminephrobacter eiseniae (strain EF01-2).